The sequence spans 364 residues: Autophagy-related protein 14 (364 aa).

Positions 5-20 (CPICETQSHVFYCAHC) are cysteine repeats. Residues 38–114 (LGKINNALRN…QDRRIKEKSR (77 aa)) adopt a coiled-coil conformation.

Belongs to the ATG14 family. As to quaternary structure, component of the autophagy-specific VPS34 PI3-kinase complex I composed of VPS15, VPS30, VPS34, ATG14 and ATG38. Interacts directly with ATG38.

The protein resides in the preautophagosomal structure membrane. The protein localises to the vacuole membrane. Required for cytoplasm to vacuole transport (Cvt) and autophagy as a part of the autophagy-specific VPS34 PI3-kinase complex I. This complex is essential to recruit the ATG8-phosphatidylinositol conjugate and the ATG12-ATG5 conjugate to the pre-autophagosomal structure. ATG14 mediates the specific binding of the VPS34 PI3-kinase complex I to the preautophagosomal structure (PAS). Required for survival and/or proliferation in kidneys and in brain. This chain is Autophagy-related protein 14, found in Candida glabrata (strain ATCC 2001 / BCRC 20586 / JCM 3761 / NBRC 0622 / NRRL Y-65 / CBS 138) (Yeast).